The primary structure comprises 132 residues: ATP synthase epsilon chain (132 aa).

Belongs to the ATPase epsilon chain family. F-type ATPases have 2 components, CF(1) - the catalytic core - and CF(0) - the membrane proton channel. CF(1) has five subunits: alpha(3), beta(3), gamma(1), delta(1), epsilon(1). CF(0) has three main subunits: a, b and c.

It is found in the cell inner membrane. Functionally, produces ATP from ADP in the presence of a proton gradient across the membrane. The polypeptide is ATP synthase epsilon chain (Jannaschia sp. (strain CCS1)).